Consider the following 222-residue polypeptide: Uridine kinase (222 aa).

Residue 13–20 (GGSGAGKT) participates in ATP binding.

Belongs to the uridine kinase family.

The protein localises to the cytoplasm. The enzyme catalyses uridine + ATP = UMP + ADP + H(+). The catalysed reaction is cytidine + ATP = CMP + ADP + H(+). It participates in pyrimidine metabolism; CTP biosynthesis via salvage pathway; CTP from cytidine: step 1/3. It functions in the pathway pyrimidine metabolism; UMP biosynthesis via salvage pathway; UMP from uridine: step 1/1. The polypeptide is Uridine kinase (Chlamydia pneumoniae (Chlamydophila pneumoniae)).